Here is an 84-residue protein sequence, read N- to C-terminus: uncharacterized protein (84 aa).

Helical transmembrane passes span 8 to 28 (IYFF…VNLL), 30 to 50 (INVI…ISTI), and 63 to 83 (VLFM…LYIP).

Its subcellular location is the cell membrane. This is an uncharacterized protein from Methanocaldococcus jannaschii (strain ATCC 43067 / DSM 2661 / JAL-1 / JCM 10045 / NBRC 100440) (Methanococcus jannaschii).